A 317-amino-acid polypeptide reads, in one-letter code: Tricarboxylate transport protein B, mitochondrial (317 aa).

The propeptide at 1 to 20 (MSGSPKFVSPFHRPHCLSAA) is removed in mature form. Solcar repeat units lie at residues 29 to 117 (THPG…LSNQ), 128 to 214 (TRGL…LRNW), and 224 to 309 (INPV…VVKV). Helical transmembrane passes span 35–55 (ILAG…TEYV), 130–150 (GLIC…CPME), 223–243 (SINP…SVFG), and 294–314 (MDVA…NKVW).

It belongs to the mitochondrial carrier (TC 2.A.29) family. Possesses a short cleavable presequence, which, however, is found to be dispensable both for targeting to mitochondria and insertion into the inner membrane. However, the presequence is required to keep SLC25A1 in a soluble state and thus in an import-competent state. Mature SLC25A1 lacking the presequence is prone to aggregation.

The protein resides in the mitochondrion inner membrane. It carries out the reaction (S)-malate(in) + citrate(out) = (S)-malate(out) + citrate(in). The enzyme catalyses D-threo-isocitrate(in) + citrate(out) = D-threo-isocitrate(out) + citrate(in). The catalysed reaction is citrate(out) + succinate(in) = citrate(in) + succinate(out). It catalyses the reaction cis-aconitate(in) + citrate(out) = cis-aconitate(out) + citrate(in). It carries out the reaction trans-aconitate(in) + citrate(out) = trans-aconitate(out) + citrate(in). The enzyme catalyses phosphoenolpyruvate(in) + citrate(out) = phosphoenolpyruvate(out) + citrate(in). The catalysed reaction is maleate(in) + citrate(out) = maleate(out) + citrate(in). Mitochondrial electroneutral antiporter that exports citrate from the mitochondria into the cytosol in exchange for malate. Also able to mediate the exchange of citrate for isocitrate, phosphoenolpyruvate, cis-aconitate and to a lesser extent trans-aconitate, maleate and succinate. In the cytoplasm, citrate plays important roles in fatty acid and sterol synthesis, regulation of glycolysis, protein acetylation, and other physiopathological processes. This is Tricarboxylate transport protein B, mitochondrial from Danio rerio (Zebrafish).